The chain runs to 146 residues: 3-hydroxyacyl-[acyl-carrier-protein] dehydratase FabZ (146 aa).

Residue His-49 is part of the active site.

The protein belongs to the thioester dehydratase family. FabZ subfamily.

The protein localises to the cytoplasm. The catalysed reaction is a (3R)-hydroxyacyl-[ACP] = a (2E)-enoyl-[ACP] + H2O. Its function is as follows. Involved in unsaturated fatty acids biosynthesis. Catalyzes the dehydration of short chain beta-hydroxyacyl-ACPs and long chain saturated and unsaturated beta-hydroxyacyl-ACPs. The protein is 3-hydroxyacyl-[acyl-carrier-protein] dehydratase FabZ of Pseudomonas savastanoi pv. phaseolicola (strain 1448A / Race 6) (Pseudomonas syringae pv. phaseolicola (strain 1448A / Race 6)).